Consider the following 400-residue polypeptide: MPAFKTLDDLTDIAGKRVLLRVDLNVPVSGGKVTDATRIERVAPTIKELSAKGAKVILLAHFGRPKGEPVADMSLSQIISAVEEVLDQAVAFGEDCVGEPAERAVAALNNGDILLLENTRFHKGEEKNDADFTAELAKNGDIYVNDAFSAAHRAHASTEGLAHILPAYAGRTMQAELEALEKGLGKPTHPVVAIVGGAKVSSKIDLLMNLVKKVDALVIGGGMANTFIAAQGIDVGKSLCEHDLAATAKQIMIEAETAGCTIVLPVDGVVAREFKANAANETVSVSAIPADAMMLDVGPKSVAVVNDWITKAATLVWNGPLGAFEIPPFDTATVSAAKHAAERSKAGKLVSVAGGGDTVSALNHAGVVDDFSYVSTAGGAFLEWMEGKELPGVAVLTRPA.

Residues 23 to 25, arginine 38, 61 to 64, arginine 120, and arginine 153 contribute to the substrate site; these read DLN and HFGR. ATP is bound by residues lysine 203, glutamate 325, and 355–358; that span reads GGDT.

It belongs to the phosphoglycerate kinase family. In terms of assembly, monomer.

It localises to the cytoplasm. The catalysed reaction is (2R)-3-phosphoglycerate + ATP = (2R)-3-phospho-glyceroyl phosphate + ADP. It participates in carbohydrate degradation; glycolysis; pyruvate from D-glyceraldehyde 3-phosphate: step 2/5. The protein is Phosphoglycerate kinase of Allorhizobium ampelinum (strain ATCC BAA-846 / DSM 112012 / S4) (Agrobacterium vitis (strain S4)).